The primary structure comprises 185 residues: Ribosome-recycling factor (185 aa).

It belongs to the RRF family.

It is found in the cytoplasm. Its function is as follows. Responsible for the release of ribosomes from messenger RNA at the termination of protein biosynthesis. May increase the efficiency of translation by recycling ribosomes from one round of translation to another. In Thermotoga sp. (strain RQ2), this protein is Ribosome-recycling factor.